Consider the following 390-residue polypeptide: Putative methylesterase 11, chloroplastic (390 aa).

The transit peptide at 1 to 46 (MGNLCSLFTPPKPVKKRKPITKRQSSIGASSSGSGLNSNRWNNRVR) directs the protein to the chloroplast. 2 disordered regions span residues 1-52 (MGNL…SSRR) and 94-119 (QGSC…DPLL). Positions 25–48 (SSIGASSSGSGLNSNRWNNRVRSS) are enriched in low complexity. The segment covering 94 to 104 (QGSCSKKNQLP) has biased composition (polar residues). The span at 105-114 (RSSSSRSRSS) shows a compositional bias: low complexity. The AB hydrolase-1 domain maps to 137–241 (NHFVLVHGGS…KAVFLAAAML (105 aa)). The active-site Acyl-ester intermediate is the Asp213. Residues Asp339 and His367 each act as charge relay system in the active site.

The protein belongs to the AB hydrolase superfamily. Methylesterase family.

Its subcellular location is the plastid. It is found in the chloroplast. Its function is as follows. Putative methylesterase. In Arabidopsis thaliana (Mouse-ear cress), this protein is Putative methylesterase 11, chloroplastic.